The chain runs to 158 residues: Ribosome maturation factor RimP (158 aa).

This sequence belongs to the RimP family.

It is found in the cytoplasm. Required for maturation of 30S ribosomal subunits. The protein is Ribosome maturation factor RimP of Pediococcus pentosaceus (strain ATCC 25745 / CCUG 21536 / LMG 10740 / 183-1w).